The following is a 434-amino-acid chain: V-type ATP synthase beta chain (434 aa).

Belongs to the ATPase alpha/beta chains family.

In terms of biological role, produces ATP from ADP in the presence of a proton gradient across the membrane. The V-type beta chain is a regulatory subunit. This chain is V-type ATP synthase beta chain (atpB), found in Borreliella burgdorferi (strain ATCC 35210 / DSM 4680 / CIP 102532 / B31) (Borrelia burgdorferi).